Here is a 212-residue protein sequence, read N- to C-terminus: MSLFDKKHLVTQADALPGRNTPMPIATLHAVNEHSMTNVPAGMEIAYFAMGCFWGVERLFWQLPGVYSTAAGYAGGYTPNPTYREVCSGQTGHAEAVRVVYDPAVISYEQLLQVFWENHDPAQGMRQGNDHGTQYRSAIYPLTPEQSTAAHASRERFQSAMADAGDERPITTEIAHATPFYYAEDEHQQYLHKNPYGYCGVGGIGVCLPPDA.

Residue Cys-52 is part of the active site.

Belongs to the MsrA Met sulfoxide reductase family.

It carries out the reaction L-methionyl-[protein] + [thioredoxin]-disulfide + H2O = L-methionyl-(S)-S-oxide-[protein] + [thioredoxin]-dithiol. It catalyses the reaction [thioredoxin]-disulfide + L-methionine + H2O = L-methionine (S)-S-oxide + [thioredoxin]-dithiol. Functionally, has an important function as a repair enzyme for proteins that have been inactivated by oxidation. Catalyzes the reversible oxidation-reduction of methionine sulfoxide in proteins to methionine. This chain is Peptide methionine sulfoxide reductase MsrA, found in Salmonella arizonae (strain ATCC BAA-731 / CDC346-86 / RSK2980).